A 236-amino-acid polypeptide reads, in one-letter code: Biosynthetic peptidoglycan transglycosylase (236 aa).

A helical transmembrane segment spans residues 12–31 (ALLWFAAGSVLVVLVLRWVP).

Belongs to the glycosyltransferase 51 family.

The protein localises to the cell inner membrane. The catalysed reaction is [GlcNAc-(1-&gt;4)-Mur2Ac(oyl-L-Ala-gamma-D-Glu-L-Lys-D-Ala-D-Ala)](n)-di-trans,octa-cis-undecaprenyl diphosphate + beta-D-GlcNAc-(1-&gt;4)-Mur2Ac(oyl-L-Ala-gamma-D-Glu-L-Lys-D-Ala-D-Ala)-di-trans,octa-cis-undecaprenyl diphosphate = [GlcNAc-(1-&gt;4)-Mur2Ac(oyl-L-Ala-gamma-D-Glu-L-Lys-D-Ala-D-Ala)](n+1)-di-trans,octa-cis-undecaprenyl diphosphate + di-trans,octa-cis-undecaprenyl diphosphate + H(+). The protein operates within cell wall biogenesis; peptidoglycan biosynthesis. Its function is as follows. Peptidoglycan polymerase that catalyzes glycan chain elongation from lipid-linked precursors. This Pseudomonas savastanoi pv. phaseolicola (strain 1448A / Race 6) (Pseudomonas syringae pv. phaseolicola (strain 1448A / Race 6)) protein is Biosynthetic peptidoglycan transglycosylase.